Reading from the N-terminus, the 739-residue chain is Platelet endothelial cell adhesion molecule (739 aa).

Residues 1–27 form the signal peptide; the sequence is MQLRWTQRGMMWLGALLTLLLCSSLKG. Over 28–599 the chain is Extracellular; the sequence is QENSFTINSI…TVRVYLPLEK (572 aa). 3 consecutive Ig-like C2-type domains span residues 35–120, 145–213, and 236–315; these read NSIH…EKTT, GGVV…IFSG, and PKFH…SKVS. N-linked (GlcNAc...) asparagine glycosylation is found at Asn-52, Asn-84, and Asn-151. A disulfide bridge connects residues Cys-57 and Cys-109. Cystine bridges form between Cys-152–Cys-206 and Cys-256–Cys-304. 9 N-linked (GlcNAc...) asparagine glycosylation sites follow: Asn-301, Asn-320, Asn-356, Asn-371, Asn-435, Asn-446, Asn-453, Asn-550, and Asn-578. Ig-like C2-type domains are found at residues 328-403, 424-493, and 499-590; these read PKLE…VQIT, GQTI…EVLR, and PVDE…NTLT. Disulfide bonds link Cys-347/Cys-386, Cys-431/Cys-476, and Cys-522/Cys-571. Residues 600–618 traverse the membrane as a helical segment; the sequence is GLIAVVVIGVIIVTLVLGA. Over 619 to 739 the chain is Cytoplasmic; sequence KCYFLKKAKA…SRTEGSLDGS (121 aa). Cys-620 carries the S-palmitoyl cysteine lipid modification. 2 consecutive short sequence motifs (ITIM motif) follow at residues 687-692 and 712-717; these read VEYTEV and TVYSEI. A phosphotyrosine; by FER mark is found at Tyr-689 and Tyr-714. The tract at residues 708 to 730 is membrane-bound segment which detaches upon phosphorylation; the sequence is TETETVYSEIRKADPDFVENRYS. The may play a role in cytoprotective signaling stretch occupies residues 722 to 739; that stretch reads PDFVENRYSRTEGSLDGS. Phosphoserine is present on residues Ser-730 and Ser-735.

In terms of assembly, trans-homodimer (via Ig-like C2-type 1 and Ig-like C2-type 2 domains); trans-homodimerization is required for cell-cell interaction. Forms a complex with BDKRB2 and GNAQ. Interacts with BDKRB2 and GNAQ. Interacts with PTPN11; Tyr-714 is critical for PTPN11 recruitment. Interacts with FER. Interacts with CD177; the interaction is Ca(2+)-dependent; the interaction is direct. Phosphorylated on Ser and Tyr residues by src kinases after cellular activation. Upon activation, phosphorylated on Ser-730 which probably initiates the dissociation of the membrane-interaction segment (residues 708-730) from the cell membrane allowing the sequential phosphorylation of Tyr-714 and Tyr-689. Constitutively phosphorylated on Ser-735 in resting platelets. Phosphorylated on tyrosine residues by FER and FES in response to FCER1 activation. In endothelial cells Fyn mediates mechanical-force (stretch or pull) induced tyrosine phosphorylation. Post-translationally, palmitoylation by ZDHHC21 is necessary for cell surface expression in endothelial cells and enrichment in membrane rafts.

The protein resides in the cell membrane. The protein localises to the membrane raft. It localises to the cell junction. Functionally, cell adhesion molecule which is required for leukocyte transendothelial migration (TEM) under most inflammatory conditions. Tyr-689 plays a critical role in TEM and is required for efficient trafficking of PECAM1 to and from the lateral border recycling compartment (LBRC) and is also essential for the LBRC membrane to be targeted around migrating leukocytes. Trans-homophilic interaction may play a role in endothelial cell-cell adhesion via cell junctions. Heterophilic interaction with CD177 plays a role in transendothelial migration of neutrophils. Homophilic ligation of PECAM1 prevents macrophage-mediated phagocytosis of neighboring viable leukocytes by transmitting a detachment signal. Promotes macrophage-mediated phagocytosis of apoptotic leukocytes by tethering them to the phagocytic cells; PECAM1-mediated detachment signal appears to be disabled in apoptotic leukocytes. Modulates bradykinin receptor BDKRB2 activation. Regulates bradykinin- and hyperosmotic shock-induced ERK1/2 activation in endothelial cells. Induces susceptibility to atherosclerosis. The polypeptide is Platelet endothelial cell adhesion molecule (PECAM1) (Bos taurus (Bovine)).